Consider the following 587-residue polypeptide: Potassium-transporting ATPase potassium-binding subunit (587 aa).

4 consecutive transmembrane segments (helical) span residues 1–21 (MSTS…LWVT), 60–80 (PVYA…LYLL), 89–109 (LNLG…VSFM), and 131–151 (GLAV…IAVV). The disordered stretch occupies residues 162–188 (AVGGPGGPNGPGGPGGPNGPGAGSRDD). Positions 164 to 183 (GGPGGPNGPGGPGGPNGPGA) are enriched in gly residues. A run of 7 helical transmembrane segments spans residues 208–228 (IRIL…GGAI), 280–300 (PTSW…FSLP), 314–334 (LAIV…NAAF), 409–429 (GLYG…LMIG), 449–469 (LYFL…MGLP), 514–534 (ALGL…LGMA), and 557–577 (FAGM…FPAL).

This sequence belongs to the KdpA family. As to quaternary structure, the system is composed of three essential subunits: KdpA, KdpB and KdpC.

It is found in the cell membrane. Its function is as follows. Part of the high-affinity ATP-driven potassium transport (or Kdp) system, which catalyzes the hydrolysis of ATP coupled with the electrogenic transport of potassium into the cytoplasm. This subunit binds the extracellular potassium ions and delivers the ions to the membrane domain of KdpB through an intramembrane tunnel. The polypeptide is Potassium-transporting ATPase potassium-binding subunit (Frankia alni (strain DSM 45986 / CECT 9034 / ACN14a)).